The sequence spans 40 residues: MADTTGRIPLWIIGTVAGILVIGLIGIFFYGAYSGLGSSL.

The helical transmembrane segment at 8 to 28 threads the bilayer; the sequence is IPLWIIGTVAGILVIGLIGIF.

The protein belongs to the PsbJ family. PSII is composed of 1 copy each of membrane proteins PsbA, PsbB, PsbC, PsbD, PsbE, PsbF, PsbH, PsbI, PsbJ, PsbK, PsbL, PsbM, PsbT, PsbX, PsbY, PsbZ, Psb30/Ycf12, at least 3 peripheral proteins of the oxygen-evolving complex and a large number of cofactors. It forms dimeric complexes.

Its subcellular location is the plastid. It is found in the chloroplast thylakoid membrane. Functionally, one of the components of the core complex of photosystem II (PSII). PSII is a light-driven water:plastoquinone oxidoreductase that uses light energy to abstract electrons from H(2)O, generating O(2) and a proton gradient subsequently used for ATP formation. It consists of a core antenna complex that captures photons, and an electron transfer chain that converts photonic excitation into a charge separation. This Oenothera elata subsp. hookeri (Hooker's evening primrose) protein is Photosystem II reaction center protein J.